The sequence spans 606 residues: DNA mismatch repair protein MutL (606 aa).

Residues 377-401 (HRPLFAPQPAPQPDREPPLPDSGSR) form a disordered region.

It belongs to the DNA mismatch repair MutL/HexB family.

Functionally, this protein is involved in the repair of mismatches in DNA. It is required for dam-dependent methyl-directed DNA mismatch repair. May act as a 'molecular matchmaker', a protein that promotes the formation of a stable complex between two or more DNA-binding proteins in an ATP-dependent manner without itself being part of a final effector complex. This chain is DNA mismatch repair protein MutL, found in Geobacter sulfurreducens (strain ATCC 51573 / DSM 12127 / PCA).